Reading from the N-terminus, the 482-residue chain is Cilia- and flagella-associated protein 53 (482 aa).

Coiled-coil stretches lie at residues 9-40, 67-124, and 152-413; these read DARIQKMRELEERLANLKADRKVEQKMVAVAE, ADLN…QALA, and IEER…AKDA. Residues 462 to 482 form a disordered region; that stretch reads VNQTLSSTDPPVWHGRRKFDW.

This sequence belongs to the CFAP53 family.

Its subcellular location is the cell projection. It is found in the cilium. The protein resides in the flagellum. In terms of biological role, may play a role in filopodium movement. The sequence is that of Cilia- and flagella-associated protein 53 from Chlamydomonas reinhardtii (Chlamydomonas smithii).